The chain runs to 585 residues: Probable phosphoglucomutase, cytoplasmic 2 (585 aa).

A disordered region spans residues methionine 1 to glycine 20. Residues arginine 25 and serine 124 each coordinate alpha-D-glucose 1,6-bisphosphate. The active-site Phosphoserine intermediate is serine 124. Serine 124, aspartate 301, aspartate 303, and aspartate 305 together coordinate Mg(2+). Serine 124 bears the Phosphoserine mark. Aspartate 305, arginine 306, threonine 369, glutamate 388, serine 390, and lysine 401 together coordinate alpha-D-glucose 1,6-bisphosphate.

The protein belongs to the phosphohexose mutase family. Monomer. Mg(2+) serves as cofactor.

It is found in the cytoplasm. The catalysed reaction is alpha-D-glucose 1-phosphate = alpha-D-glucose 6-phosphate. The enzyme catalyses O-phospho-L-seryl-[protein] + alpha-D-glucose 1-phosphate = alpha-D-glucose 1,6-bisphosphate + L-seryl-[protein]. It catalyses the reaction alpha-D-glucose 1,6-bisphosphate + L-seryl-[protein] = O-phospho-L-seryl-[protein] + alpha-D-glucose 6-phosphate. In terms of biological role, catalyzes the reversible isomerization of alpha-D-glucose 1-phosphate to alpha-D-glucose 6-phosphate. The mechanism proceeds via the intermediate compound alpha-D-glucose 1,6-bisphosphate. This enzyme participates in both the breakdown and synthesis of glucose. The polypeptide is Probable phosphoglucomutase, cytoplasmic 2 (Arabidopsis thaliana (Mouse-ear cress)).